A 180-amino-acid polypeptide reads, in one-letter code: Minor allergen Can f 2 (180 aa).

A signal peptide spans 1–18; sequence MQLLLLTVGLALICGLQA. The N-linked (GlcNAc...) asparagine glycan is linked to Asn-45. A disulfide bridge connects residues Cys-82 and Cys-175.

The protein belongs to the calycin superfamily. Lipocalin family. As to expression, tongue epithelial tissue and parotid gland.

It localises to the secreted. The sequence is that of Minor allergen Can f 2 from Canis lupus familiaris (Dog).